The sequence spans 118 residues: V-type proton ATPase subunit G 3 (118 aa).

Residues 3 to 54 (SQSQGIQQLLQAEKRAKDKLEEAKKRKNKRLRQAKEEATADIDQYRLKREAD) are a coiled coil. Residues 19–39 (KDKLEEAKKRKNKRLRQAKEE) form a disordered region.

Belongs to the V-ATPase G subunit family. V-ATPase is a heteromultimeric enzyme made up of two complexes: the ATP-hydrolytic V1 complex and the proton translocation V0 complex. The V1 complex consists of three catalytic AB heterodimers that form a heterohexamer, three peripheral stalks each consisting of EG heterodimers, one central rotor including subunits D and F, and the regulatory subunits C and H. The proton translocation complex V0 consists of the proton transport subunit a, a ring of proteolipid subunits c9c'', rotary subunit d, subunits e and f, and two accessory subunits.

Subunit of the V1 complex of vacuolar(H+)-ATPase (V-ATPase), a multisubunit enzyme composed of a peripheral complex (V1) that hydrolyzes ATP and a membrane integral complex (V0) that translocates protons. V-ATPase is responsible for acidifying and maintaining the pH of intracellular compartments and in some cell types, is targeted to the plasma membrane, where it is responsible for acidifying the extracellular environment. This Xenopus laevis (African clawed frog) protein is V-type proton ATPase subunit G 3 (atp6v1g3).